Consider the following 92-residue polypeptide: MSKVCIIAWVYGRVQGVGFRYTTQYEAKKLGLTGYAKNLDDGSVEVVACGDEGQVEKLMQWLKSGGPRSARVERVLSEPHHPSGELTDFRIR.

C5 and C49 are disulfide-bonded. In terms of domain architecture, Acylphosphatase-like spans 5–92 (CIIAWVYGRV…SGELTDFRIR (88 aa)). Catalysis depends on residues R20 and N38.

This sequence belongs to the acylphosphatase family.

It catalyses the reaction an acyl phosphate + H2O = a carboxylate + phosphate + H(+). The chain is Acylphosphatase from Escherichia coli O6:H1 (strain CFT073 / ATCC 700928 / UPEC).